A 335-amino-acid polypeptide reads, in one-letter code: Nucleoid-associated protein PSEEN4449 (335 aa).

The protein belongs to the YejK family.

Its subcellular location is the cytoplasm. It is found in the nucleoid. This Pseudomonas entomophila (strain L48) protein is Nucleoid-associated protein PSEEN4449.